The primary structure comprises 149 residues: Transcriptional regulator MraZ (149 aa).

SpoVT-AbrB domains lie at 7 to 54 and 83 to 126; these read KYVN…GISH and ALQL…QPQN.

It belongs to the MraZ family. In terms of assembly, forms oligomers.

Its subcellular location is the cytoplasm. The protein localises to the nucleoid. The polypeptide is Transcriptional regulator MraZ (Rickettsia canadensis (strain McKiel)).